A 245-amino-acid polypeptide reads, in one-letter code: 1-(5-phosphoribosyl)-5-[(5-phosphoribosylamino)methylideneamino] imidazole-4-carboxamide isomerase (245 aa).

Aspartate 7 acts as the Proton acceptor in catalysis. The Proton donor role is filled by aspartate 129.

The protein belongs to the HisA/HisF family.

The protein localises to the cytoplasm. The enzyme catalyses 1-(5-phospho-beta-D-ribosyl)-5-[(5-phospho-beta-D-ribosylamino)methylideneamino]imidazole-4-carboxamide = 5-[(5-phospho-1-deoxy-D-ribulos-1-ylimino)methylamino]-1-(5-phospho-beta-D-ribosyl)imidazole-4-carboxamide. It participates in amino-acid biosynthesis; L-histidine biosynthesis; L-histidine from 5-phospho-alpha-D-ribose 1-diphosphate: step 4/9. This Aliivibrio salmonicida (strain LFI1238) (Vibrio salmonicida (strain LFI1238)) protein is 1-(5-phosphoribosyl)-5-[(5-phosphoribosylamino)methylideneamino] imidazole-4-carboxamide isomerase.